The sequence spans 363 residues: MQLLQSSVIAATVGAALVAAAPVELEARDSCTFTSAADAKSGKTSCSTITLSNIEVPAGETLDLTGLNDGTTVIFSGETTFGYKEWEGPLISVSGTNIKVQQASGAKIDGDGSRWWDGEGGNGGKTKPKFFYAHKLDSSSITGLQIYNTPVQGFSIQSDNLNITDVTIDNSAGTAEGHNTDAFDIGSSTYINIDGATVYNQDDCLAINSGSHITFTNGYCDGGHGLSIGSVGGRSDNTVEDVTISNSKVVNSQNGVRIKTVYGATGTVSNVKFEDITLSGITKYGLVVEQDYENGSPTGTPTNGITVSGITFEKVTGTVESDATDIYILCGSGSCTDWTWSGVSITGGKTSSKCENVPTGASC.

A signal peptide spans 1–20; sequence MQLLQSSVIAATVGAALVAA. The propeptide occupies 21 to 28; it reads APVELEAR. Cysteines 31 and 46 form a disulfide. PbH1 repeat units follow at residues 158-187, 188-209, 210-230, 239-260, 268-290, and 302-347; these read SDNL…DIGS, STYI…AINS, GSHI…SIGS, VEDV…RIKT, VSNV…VVEQ, and TNGI…SITG. Asn-162 carries an N-linked (GlcNAc...) asparagine glycan. Catalysis depends on Asp-202, which acts as the Proton donor. A disulfide bridge links Cys-204 with Cys-220. Residue His-224 is part of the active site. 2 cysteine pairs are disulfide-bonded: Cys-330–Cys-335 and Cys-354–Cys-363.

Belongs to the glycosyl hydrolase 28 family.

The protein localises to the secreted. It carries out the reaction (1,4-alpha-D-galacturonosyl)n+m + H2O = (1,4-alpha-D-galacturonosyl)n + (1,4-alpha-D-galacturonosyl)m.. Functionally, involved in maceration and soft-rotting of plant tissue. Hydrolyzes the 1,4-alpha glycosidic bonds of de-esterified pectate in the smooth region of the plant cell wall. In Aspergillus parasiticus, this protein is Probable endopolygalacturonase A (pgaA).